A 145-amino-acid chain; its full sequence is EDIPQPPVSQFHIQGQVYCDTCRAGFITELSEFIPGASLRLQCKDKENGDVTFTEVGYTRAEGLYSMLVERDHKNEFCEITLISSGRKDCNEIPTEGWAKPSLKFKLNTVNGTTRTVNPLGFFKKEALPKCAQVYNKLGMYPPNM.

Disulfide bonds link Cys-19–Cys-90, Cys-22–Cys-131, and Cys-43–Cys-78. The N-linked (GlcNAc...) (complex) asparagine; alternate glycan is linked to Asn-111. A glycan (N-linked (GlcNAc...) (high mannose) asparagine; alternate) is linked at Asn-111.

This sequence belongs to the Ole e I family. N-glycosylated; contains high mannose (Man(7)-GlcNAc) and partially fucosylated complex glycans (GlcNAc-Man(3)-Xyl-GlcNAc). Complex glycans may contribute to the antigenicity. Exists both in a glycosylated and in a non-glycosylated form. Ole e 1 and Ole e 1.0103 are the only non-glycosylated isoallergens. In terms of processing, a second potential glycosylation site exists at position 50 in cv. Bella de Espana and cv. Hojiblanca. As to expression, expressed in tapetum and pollen grains. Not detected in petals, roots or leaves.

The protein localises to the endoplasmic reticulum. It localises to the secreted. Its function is as follows. May be involved in recognition between pollen-stigma and pollen tube-style cells. This is Major pollen allergen Ole e 1 from Olea europaea (Common olive).